The following is a 299-amino-acid chain: HTH-type transcriptional regulator CysL (299 aa).

Residues M1–T58 enclose the HTH lysR-type domain. Positions F18 to K37 form a DNA-binding region, H-T-H motif.

It belongs to the LysR transcriptional regulatory family.

Functionally, transcriptional activator of the cysJI operon which is involved in sulfur assimilation. Also negatively regulates its own transcription. This Bacillus subtilis (strain 168) protein is HTH-type transcriptional regulator CysL (cysL).